The chain runs to 347 residues: Protein phosphatase 2C homolog 1 (347 aa).

Positions 1-41 (MKGSHPNAGSLLEPLHKLNPFSENSTSGHRKNASDHSADGE) are disordered. Over residues 32-41 (NASDHSADGE) the composition is skewed to basic and acidic residues. In terms of domain architecture, PPM-type phosphatase spans 71 to 323 (LAGLMEDKNQ…DNITCIVVNL (253 aa)). Mn(2+) contacts are provided by D109, G110, D275, and D314.

The protein belongs to the PP2C family. In terms of assembly, monomer. Mg(2+) is required as a cofactor. The cofactor is Mn(2+).

The catalysed reaction is O-phospho-L-seryl-[protein] + H2O = L-seryl-[protein] + phosphate. The enzyme catalyses O-phospho-L-threonyl-[protein] + H2O = L-threonyl-[protein] + phosphate. In terms of biological role, serine and threonine phosphatase. Has a specialized role in the heat shock response. May be responsible for the dephosphorylation of hsp90. The chain is Protein phosphatase 2C homolog 1 (ptc1) from Schizosaccharomyces pombe (strain 972 / ATCC 24843) (Fission yeast).